We begin with the raw amino-acid sequence, 1060 residues long: Carbamoyl phosphate synthase large chain (1060 aa).

A carboxyphosphate synthetic domain region spans residues 1–401 (MPKRTDIRKI…SLLKACRSLE (401 aa)). ATP is bound by residues Arg-129, Arg-169, Gly-175, Gly-176, Arg-208, Ile-210, Glu-215, Gly-241, Ile-242, His-243, Gln-284, and Glu-298. An ATP-grasp 1 domain is found at 133-327 (KQLMEELNQP…IAKLAAKIAV (195 aa)). Mg(2+) contacts are provided by Gln-284, Glu-298, and Asn-300. Positions 284, 298, and 300 each coordinate Mn(2+). The tract at residues 402 to 546 (IGVDHIKIAD…YSTYAVENES (145 aa)) is oligomerization domain. Residues 547–929 (LISDKASILV…ALYKAFEAAY (383 aa)) are carbamoyl phosphate synthetic domain. Residues 671–861 (EATLQALNIP…MAQVATKVIL (191 aa)) enclose the ATP-grasp 2 domain. ATP is bound by residues Arg-707, Ala-746, Leu-748, Glu-752, Gly-777, Val-778, His-779, Ser-780, Gln-820, and Glu-832. Residues Gln-820, Glu-832, and Asn-834 each contribute to the Mg(2+) site. Gln-820, Glu-832, and Asn-834 together coordinate Mn(2+). An MGS-like domain is found at 930–1060 (LHMPDYGNIV…SRAFTLKVLD (131 aa)). Residues 930–1060 (LHMPDYGNIV…SRAFTLKVLD (131 aa)) are allosteric domain.

Belongs to the CarB family. Composed of two chains; the small (or glutamine) chain promotes the hydrolysis of glutamine to ammonia, which is used by the large (or ammonia) chain to synthesize carbamoyl phosphate. Tetramer of heterodimers (alpha,beta)4. Requires Mg(2+) as cofactor. Mn(2+) serves as cofactor.

The enzyme catalyses hydrogencarbonate + L-glutamine + 2 ATP + H2O = carbamoyl phosphate + L-glutamate + 2 ADP + phosphate + 2 H(+). It catalyses the reaction hydrogencarbonate + NH4(+) + 2 ATP = carbamoyl phosphate + 2 ADP + phosphate + 2 H(+). The protein operates within amino-acid biosynthesis; L-arginine biosynthesis; carbamoyl phosphate from bicarbonate: step 1/1. It functions in the pathway pyrimidine metabolism; UMP biosynthesis via de novo pathway; (S)-dihydroorotate from bicarbonate: step 1/3. Large subunit of the glutamine-dependent carbamoyl phosphate synthetase (CPSase). CPSase catalyzes the formation of carbamoyl phosphate from the ammonia moiety of glutamine, carbonate, and phosphate donated by ATP, constituting the first step of 2 biosynthetic pathways, one leading to arginine and/or urea and the other to pyrimidine nucleotides. The large subunit (synthetase) binds the substrates ammonia (free or transferred from glutamine from the small subunit), hydrogencarbonate and ATP and carries out an ATP-coupled ligase reaction, activating hydrogencarbonate by forming carboxy phosphate which reacts with ammonia to form carbamoyl phosphate. The sequence is that of Carbamoyl phosphate synthase large chain from Streptococcus agalactiae serotype V (strain ATCC BAA-611 / 2603 V/R).